A 315-amino-acid chain; its full sequence is Tyrosine recombinase XerC (315 aa).

The region spanning M1 to V103 is the Core-binding (CB) domain. Residues E124–D306 enclose the Tyr recombinase domain. Active-site residues include R164, K188, H258, R261, and H284. The active-site O-(3'-phospho-DNA)-tyrosine intermediate is Y293.

This sequence belongs to the 'phage' integrase family. XerC subfamily. Forms a cyclic heterotetrameric complex composed of two molecules of XerC and two molecules of XerD.

The protein resides in the cytoplasm. Its function is as follows. Site-specific tyrosine recombinase, which acts by catalyzing the cutting and rejoining of the recombining DNA molecules. The XerC-XerD complex is essential to convert dimers of the bacterial chromosome into monomers to permit their segregation at cell division. It also contributes to the segregational stability of plasmids. The protein is Tyrosine recombinase XerC of Chlamydia trachomatis serovar L2b (strain UCH-1/proctitis).